We begin with the raw amino-acid sequence, 377 residues long: Opsin, blue-sensitive (377 aa).

Residues 1 to 56 (MLLHNKTLAGKALAFIAEEGYVPSMREKFLGWNVPPEYSDLVHPHWRAFPAPGKHF) lie on the Extracellular side of the membrane. Asn-5 carries N-linked (GlcNAc...) asparagine glycosylation. The chain crosses the membrane as a helical span at residues 57–81 (HIGLAIIYSMLLIMSLVGNCCVIWI). Topologically, residues 82-93 (FSTSKSLRTPSN) are cytoplasmic. The helical transmembrane segment at 94-119 (MFIVSLAIFDIIMAFEMPMLVISSFM) threads the bilayer. Over 120-132 (ERMIGWEIGCDVY) the chain is Extracellular. A disulfide bridge connects residues Cys-129 and Cys-206. A helical membrane pass occupies residues 133 to 152 (SVFGSISGMGQAMTNAAIAF). Over 153–170 (DRYRTISCPIDGRLNSKQ) the chain is Cytoplasmic. A helical membrane pass occupies residues 171–195 (AAVIIAFTWFWVTPFTVLPLLKVWG). The Extracellular portion of the chain corresponds to 196–219 (RYTTEGFLTTCSFDFLTDDEDTKV). The chain crosses the membrane as a helical span at residues 220–247 (FVTCIFIWAYVIPLIFIILFYSRLLSSI). Over 248–282 (RNHEKMLREQAKKMNVKSLVSNQDKERSAEVRIAK) the chain is Cytoplasmic. The chain crosses the membrane as a helical span at residues 283–306 (VAFTIFFLFLLAWTPYATVALIGV). The Extracellular segment spans residues 307–314 (YGNRELLT). A helical membrane pass occupies residues 315 to 339 (PVSTMLPAVFAKTVSCIDPWIYAIN). An N6-(retinylidene)lysine modification is found at Lys-326. Over 340–377 (HPRYRQELQKRCKWMGIHEPETTSDATSAQTEKIKTDE) the chain is Cytoplasmic.

Belongs to the G-protein coupled receptor 1 family. Opsin subfamily. In terms of processing, phosphorylated on some or all of the serine and threonine residues present in the C-terminal region. In terms of tissue distribution, expressed in the dorsal region of the retina and sparsely expressed in the ventral region.

It localises to the membrane. Visual pigments are the light-absorbing molecules that mediate vision. They consist of an apoprotein, opsin, covalently linked to 11-cis-retinal. In Apis mellifera (Honeybee), this protein is Opsin, blue-sensitive (BLOP).